Here is a 258-residue protein sequence, read N- to C-terminus: Triosephosphate isomerase (258 aa).

Residue Asn-11–Lys-13 coordinates substrate. His-101 serves as the catalytic Electrophile. Catalysis depends on Glu-173, which acts as the Proton acceptor. Substrate contacts are provided by residues Gly-179, Ser-219, and Gly-240 to Gly-241.

Belongs to the triosephosphate isomerase family. As to quaternary structure, homodimer.

It is found in the cytoplasm. It catalyses the reaction D-glyceraldehyde 3-phosphate = dihydroxyacetone phosphate. The protein operates within carbohydrate biosynthesis; gluconeogenesis. It functions in the pathway carbohydrate degradation; glycolysis; D-glyceraldehyde 3-phosphate from glycerone phosphate: step 1/1. Its function is as follows. Involved in the gluconeogenesis. Catalyzes stereospecifically the conversion of dihydroxyacetone phosphate (DHAP) to D-glyceraldehyde-3-phosphate (G3P). The sequence is that of Triosephosphate isomerase from Streptomyces coelicolor (strain ATCC BAA-471 / A3(2) / M145).